Here is a 346-residue protein sequence, read N- to C-terminus: Acetylserotonin O-methyltransferase (346 aa).

Residues Y148, W165, D211, 236-238 (GDF), and K253 each bind S-adenosyl-L-methionine. The Proton donor/acceptor role is filled by H256. Substrate is bound by residues D257, N303, and Q307.

It belongs to the class I-like SAM-binding methyltransferase superfamily. Cation-independent O-methyltransferase family. As to quaternary structure, homodimer. Expressed in pineal gland and retina.

The catalysed reaction is N-acetylserotonin + S-adenosyl-L-methionine = melatonin + S-adenosyl-L-homocysteine + H(+). Its pathway is aromatic compound metabolism; melatonin biosynthesis; melatonin from serotonin: step 1/2. In terms of biological role, catalyzes the transfer of a methyl group onto N-acetylserotonin, producing melatonin (N-acetyl-5-methoxytryptamine). The sequence is that of Acetylserotonin O-methyltransferase (ASMT) from Gallus gallus (Chicken).